Here is a 37-residue protein sequence, read N- to C-terminus: Delta/kappa-conotoxin Mo3964 (37 aa).

3 disulfide bridges follow: cysteine 4–cysteine 12, cysteine 11–cysteine 27, and cysteine 21–cysteine 34.

As to expression, expressed by the venom duct.

Its subcellular location is the secreted. Functionally, this toxin reduces the outward currents that are due to the opening of voltage-gated potassium channels in DRG neurons. In addition, leftward shift in the presence of this toxin is observed in averaged normalized conductance-voltage plot of outward sodium currents (Nav1.2/SCN2A). The protein is Delta/kappa-conotoxin Mo3964 of Conus monile (Necklace cone).